The chain runs to 88 residues: Small ribosomal subunit protein uS17 (88 aa).

The protein belongs to the universal ribosomal protein uS17 family. In terms of assembly, part of the 30S ribosomal subunit.

Functionally, one of the primary rRNA binding proteins, it binds specifically to the 5'-end of 16S ribosomal RNA. The polypeptide is Small ribosomal subunit protein uS17 (Stutzerimonas stutzeri (strain A1501) (Pseudomonas stutzeri)).